Reading from the N-terminus, the 1485-residue chain is Dicer-like protein 2 (1485 aa).

Positions Met1–Ser11 are enriched in low complexity. The interval Met1–Arg61 is disordered. The Helicase ATP-binding domain maps to Met72–Ser250. Residue Met85–Thr92 participates in ATP binding. The short motif at Asp193–His196 is the DEAH box element. The region spanning Lys415–Asp579 is the Helicase C-terminal domain. The Dicer dsRNA-binding fold domain maps to Ala609–Asp712. 2 consecutive RNase III domains span residues Ala988–Gly1127 and Leu1168–Gly1358. Positions 1208, 1344, and 1347 each coordinate Mg(2+). Positions His1388 to Glu1469 constitute a DRBM domain.

The protein belongs to the helicase family. Dicer subfamily. It depends on Mg(2+) as a cofactor. Mn(2+) serves as cofactor.

Dicer-like endonuclease involved in cleaving double-stranded RNA in the RNA interference (RNAi) pathway. Produces 21 to 25 bp dsRNAs (siRNAs) which target the selective destruction of homologous RNAs leading to sequence-specific suppression of gene expression, called post-transcriptional gene silencing (PTGS). Part of a broad host defense response against viral infection and transposons. The polypeptide is Dicer-like protein 2 (DCL2) (Pyricularia oryzae (strain 70-15 / ATCC MYA-4617 / FGSC 8958) (Rice blast fungus)).